The chain runs to 493 residues: Cytochrome P450 2W1 (493 aa).

The first 23 residues, 1-23 (MALLLLGVWGILLLLGLWGLLQG), serve as a signal peptide directing secretion. N-linked (GlcNAc...) asparagine glycosylation is present at Asn-180. Cys-436 contacts heme.

It belongs to the cytochrome P450 family. Heme is required as a cofactor. Detected in colon, ileum, and testes.

It is found in the endoplasmic reticulum lumen. Its subcellular location is the cell membrane. The protein localises to the microsome membrane. It carries out the reaction all-trans-retinoate + reduced [NADPH--hemoprotein reductase] + O2 = all-trans-4-hydroxyretinoate + oxidized [NADPH--hemoprotein reductase] + H2O + H(+). The catalysed reaction is 1-(9Z-octadecenoyl)-sn-glycero-3-phosphocholine + reduced [NADPH--hemoprotein reductase] + O2 = 1-[8-hydroxy-(9Z)-octadecenoyl]-sn-glycero-3-phosphocholine + oxidized [NADPH--hemoprotein reductase] + H2O + H(+). The enzyme catalyses 1-(9Z-octadecenoyl)-sn-glycero-3-phosphocholine + reduced [NADPH--hemoprotein reductase] + O2 = 1-[11-hydroxy-(9Z)-octadecenoyl]-sn-glycero-3-phosphocholine + oxidized [NADPH--hemoprotein reductase] + H2O + H(+). It catalyses the reaction 1-(9Z-octadecenoyl)-sn-glycero-3-phosphocholine + reduced [NADPH--hemoprotein reductase] + O2 = 1-[(9S,10R)-epoxy-octadecanoyl]-sn-glycero-3-phosphocholine + oxidized [NADPH--hemoprotein reductase] + H2O + H(+). It carries out the reaction 1-(9Z-octadecenoyl)-sn-glycero-3-phosphocholine + reduced [NADPH--hemoprotein reductase] + O2 = 1-[(9R,10S)-epoxy-octadecanoyl]-sn-glycero-3-phosphocholine + oxidized [NADPH--hemoprotein reductase] + H2O + H(+). In terms of biological role, a cytochrome P450 monooxygenase that may play a role in retinoid and phospholipid metabolism. Catalyzes the hydroxylation of saturated carbon hydrogen bonds. Hydroxylates all trans-retinoic acid (atRA) to 4-hydroxyretinoate and may regulate atRA clearance. Other retinoids such as all-trans retinol and all-trans retinal are potential endogenous substrates. Catalyzes both epoxidation of double bonds and hydroxylation of carbon hydrogen bonds of the fatty acyl chain of 1-acylphospholipids/2-lysophospholipids. Can metabolize various lysophospholipids classes including lysophosphatidylcholines (LPCs), lysophosphatidylinositols (LPIs), lysophosphatidylserines (LPSs), lysophosphatidylglycerols (LPGs), lysophosphatidylethanolamines (LPEs) and lysophosphatidic acids (LPAs). Has low or no activity toward 2-acylphospholipids/1-lysophospholipids, diacylphospholipids and free fatty acids. May play a role in tumorigenesis by activating procarcinogens such as aflatoxin B1, polycyclic aromatic hydrocarbon dihydrodiols and aromatic amines. Mechanistically, uses molecular oxygen inserting one oxygen atom into a substrate, and reducing the second into a water molecule, with two electrons provided by NADPH via cytochrome P450 reductase (CPR; NADPH-ferrihemoprotein reductase). The chain is Cytochrome P450 2W1 (Cyp2w1) from Mus musculus (Mouse).